Reading from the N-terminus, the 2144-residue chain is Reducing polyketide synthase PKS2 (2144 aa).

Residues proline 10–alanine 436 enclose the Ketosynthase family 3 (KS3) domain. Catalysis depends on for beta-ketoacyl synthase activity residues cysteine 183, histidine 319, and histidine 360. A malonyl-CoA:ACP transacylase (MAT) region spans residues valine 538–alanine 855. The N-terminal hotdog fold stretch occupies residues histidine 924–aspartate 1058. The interval histidine 924–aspartate 1214 is dehydratase (DH) domain. In terms of domain architecture, PKS/mFAS DH spans histidine 924 to glutamine 1237. A C-terminal hotdog fold region spans residues histidine 1076–glutamine 1237. An enoyl reductase (ER) domain region spans residues glycine 1461–leucine 1747. Positions alanine 1771–valine 1948 are ketoreductase (KR) domain. Residues glutamate 2059–arginine 2136 form the Carrier domain. Position 2096 is an O-(pantetheine 4'-phosphoryl)serine (serine 2096).

It participates in mycotoxin biosynthesis. Reducing polyketide synthase (PKS); part of the Tox1A locus, one of the 2 loci that mediate the biosynthesis of T-toxin, a family of linear polyketides 37 to 45 carbons in length, of which the major component is 41 carbons, and which leads to high virulence to maize. One of the PKSs (PKS1 or PKS2) could synthesize a precursor, used subsequently by the other PKS as starter unit, to add additional carbons. Variability in the length of the final carbon backbone C35-47 could be achieved by varying the number of condensation cycles, or use of different starter or extender units or might be due to decarboxylation of the penultimate product, catalyzed by DEC1. Additional proteins are required for the biosynthesis of T-toxin, including oxidoreductases RED1, RED2, RED3, LAM1 and OXI1, as well as esterase TOX9. The polypeptide is Reducing polyketide synthase PKS2 (Cochliobolus heterostrophus (strain C4 / ATCC 48331 / race T) (Southern corn leaf blight fungus)).